Here is a 250-residue protein sequence, read N- to C-terminus: Hydroxyacylglutathione hydrolase (250 aa).

The Zn(2+) site is built by H52, H54, D56, H57, H107, D128, and H166.

Belongs to the metallo-beta-lactamase superfamily. Glyoxalase II family. As to quaternary structure, monomer. The cofactor is Zn(2+).

It carries out the reaction an S-(2-hydroxyacyl)glutathione + H2O = a 2-hydroxy carboxylate + glutathione + H(+). The protein operates within secondary metabolite metabolism; methylglyoxal degradation; (R)-lactate from methylglyoxal: step 2/2. Functionally, thiolesterase that catalyzes the hydrolysis of S-D-lactoyl-glutathione to form glutathione and D-lactic acid. This is Hydroxyacylglutathione hydrolase from Neisseria gonorrhoeae (strain ATCC 700825 / FA 1090).